A 229-amino-acid polypeptide reads, in one-letter code: ATP synthase subunit a (229 aa).

A run of 7 helical transmembrane segments spans residues 24-44 (RLCF…LLFC), 45-65 (LFDL…FMLF), 83-103 (LLFC…CFLC), 117-137 (FMDV…SLLC), 143-163 (FLRL…FFDF), 177-199 (CYFI…LYLL), and 206-228 (LQLF…FLLF).

This sequence belongs to the ATPase A chain family. As to quaternary structure, F-type ATPases have 2 components, CF(1) - the catalytic core - and CF(0) - the membrane proton channel. CF(1) has five subunits: alpha(3), beta(3), gamma(1), delta(1), epsilon(1). CF(0) has three main subunits: a, b and c.

It localises to the mitochondrion inner membrane. Functionally, mitochondrial membrane ATP synthase (F(1)F(0) ATP synthase or Complex V) produces ATP from ADP in the presence of a proton gradient across the membrane which is generated by electron transport complexes of the respiratory chain. F-type ATPases consist of two structural domains, F(1) - containing the extramembraneous catalytic core and F(0) - containing the membrane proton channel, linked together by a central stalk and a peripheral stalk. During catalysis, ATP synthesis in the catalytic domain of F(1) is coupled via a rotary mechanism of the central stalk subunits to proton translocation. Key component of the proton channel; it may play a direct role in the translocation of protons across the membrane. The protein is ATP synthase subunit a (ATP6) of Trypanosoma brucei brucei.